A 292-amino-acid chain; its full sequence is Norajmaline N-methyltransferase (292 aa).

The SAM motif I stretch occupies residues 71 to 80 (KNMLDIGCGV). Positions 134–142 (KDGTFDLVL) are SAM motif II. A Vacuolar targeting signal motif is present at residues 135 to 141 (DGTFDLV). The interval 161 to 170 (IRVAAPGAPI) is SAM motif III.

The protein belongs to the class I-like SAM-binding methyltransferase superfamily. gTMT family. As to quaternary structure, homodimer. Mainly expressed in mature roots and, to a lesser extent, in leaves, stems and flowers.

The protein resides in the vacuole membrane. The catalysed reaction is norajmaline + S-adenosyl-L-methionine = ajmaline + S-adenosyl-L-homocysteine + H(+). The enzyme catalyses 4-methylnorajmaline + S-adenosyl-L-methionine = 4-methylajmaline + S-adenosyl-L-homocysteine + H(+). The protein operates within alkaloid biosynthesis; ajmaline biosynthesis. Its function is as follows. N-methyltransferase involved in the biosynthesis of ajmaline-type monoterpenoid indole alkaloids (MIAs) natural products, important plant-derived pharmaceuticals used in the therapy of heart disorders. Catalyzes the indole N-methylation of norajmaline to produce ajmaline. Also able, with a lower efficiency, to mediates the conversion of 4-methylnorajmaline to 4-methylajmaline. The protein is Norajmaline N-methyltransferase of Rauvolfia serpentina (Serpentine wood).